The primary structure comprises 465 residues: Methionine aminopeptidase 2-1 (465 aa).

The interval 1 to 100 (MGSKTAENES…QSSPPRIPLA (100 aa)) is disordered. Over residues 31–40 (RGAHWSRDGD) the composition is skewed to basic and acidic residues. Residues 75 to 87 (SKKRKKRPKKKTS) are compositionally biased toward basic residues. Residue H216 coordinates substrate. The a divalent metal cation site is built by D237, D248, and H317. Residue H325 participates in substrate binding. A divalent metal cation contacts are provided by E350 and E446.

It belongs to the peptidase M24A family. Methionine aminopeptidase eukaryotic type 2 subfamily. Requires Co(2+) as cofactor. Zn(2+) serves as cofactor. Mn(2+) is required as a cofactor. The cofactor is Fe(2+).

It is found in the cytoplasm. The enzyme catalyses Release of N-terminal amino acids, preferentially methionine, from peptides and arylamides.. In terms of biological role, cotranslationally removes the N-terminal methionine from nascent proteins. The N-terminal methionine is often cleaved when the second residue in the primary sequence is small and uncharged (Met-Ala-, Cys, Gly, Pro, Ser, Thr, or Val). In Penicillium rubens (strain ATCC 28089 / DSM 1075 / NRRL 1951 / Wisconsin 54-1255) (Penicillium chrysogenum), this protein is Methionine aminopeptidase 2-1.